The primary structure comprises 211 residues: Thiamine-phosphate synthase (211 aa).

Residues 36-40 (QLRDK) and asparagine 68 each bind 4-amino-2-methyl-5-(diphosphooxymethyl)pyrimidine. Mg(2+) contacts are provided by aspartate 69 and aspartate 88. Serine 107 lines the 4-amino-2-methyl-5-(diphosphooxymethyl)pyrimidine pocket. Residue 133-135 (TKS) coordinates 2-[(2R,5Z)-2-carboxy-4-methylthiazol-5(2H)-ylidene]ethyl phosphate. Lysine 136 is a 4-amino-2-methyl-5-(diphosphooxymethyl)pyrimidine binding site. 2-[(2R,5Z)-2-carboxy-4-methylthiazol-5(2H)-ylidene]ethyl phosphate contacts are provided by residues glycine 164 and 184–185 (IS).

Belongs to the thiamine-phosphate synthase family. Mg(2+) serves as cofactor.

The enzyme catalyses 2-[(2R,5Z)-2-carboxy-4-methylthiazol-5(2H)-ylidene]ethyl phosphate + 4-amino-2-methyl-5-(diphosphooxymethyl)pyrimidine + 2 H(+) = thiamine phosphate + CO2 + diphosphate. It catalyses the reaction 2-(2-carboxy-4-methylthiazol-5-yl)ethyl phosphate + 4-amino-2-methyl-5-(diphosphooxymethyl)pyrimidine + 2 H(+) = thiamine phosphate + CO2 + diphosphate. The catalysed reaction is 4-methyl-5-(2-phosphooxyethyl)-thiazole + 4-amino-2-methyl-5-(diphosphooxymethyl)pyrimidine + H(+) = thiamine phosphate + diphosphate. The protein operates within cofactor biosynthesis; thiamine diphosphate biosynthesis; thiamine phosphate from 4-amino-2-methyl-5-diphosphomethylpyrimidine and 4-methyl-5-(2-phosphoethyl)-thiazole: step 1/1. Its function is as follows. Condenses 4-methyl-5-(beta-hydroxyethyl)thiazole monophosphate (THZ-P) and 2-methyl-4-amino-5-hydroxymethyl pyrimidine pyrophosphate (HMP-PP) to form thiamine monophosphate (TMP). The protein is Thiamine-phosphate synthase of Halalkalibacterium halodurans (strain ATCC BAA-125 / DSM 18197 / FERM 7344 / JCM 9153 / C-125) (Bacillus halodurans).